The chain runs to 366 residues: Zinc finger CCCH domain-containing protein 11 (366 aa).

Positions 43-66 are disordered; the sequence is LHQAVQPKPDPTKTAAKKKKEEEK. Positions 54 to 79 form a coiled coil; sequence TKTAAKKKKEEEKAREKELNDLFKVA. 2 consecutive C3H1-type zinc fingers follow at residues 90-117 and 160-198; these read DPKS…HDLN and KPTD…HALP. Residues 208 to 234 adopt a coiled-coil conformation; sequence KALLEEESEKIAIEDEIEDQRKKVKTT. The segment at 293–338 is disordered; that stretch reads YERQEESEANEEPSNKNQDEGPSSSTSNGKEVEESDDEDINIDDDL. Positions 312 to 321 are enriched in polar residues; that stretch reads EGPSSSTSNG. Acidic residues predominate over residues 325–338; that stretch reads EESDDEDINIDDDL.

The protein is Zinc finger CCCH domain-containing protein 11 of Oryza sativa subsp. japonica (Rice).